We begin with the raw amino-acid sequence, 210 residues long: Thymidylate kinase (210 aa).

Residue G11 to T18 participates in ATP binding.

Belongs to the thymidylate kinase family.

It carries out the reaction dTMP + ATP = dTDP + ADP. Functionally, phosphorylation of dTMP to form dTDP in both de novo and salvage pathways of dTTP synthesis. The chain is Thymidylate kinase (tmk) from Halalkalibacterium halodurans (strain ATCC BAA-125 / DSM 18197 / FERM 7344 / JCM 9153 / C-125) (Bacillus halodurans).